We begin with the raw amino-acid sequence, 7073 residues long: Replicase polyprotein 1ab (7073 aa).

Topologically, residues 1-2202 are cytoplasmic; it reads MESLVLGVNE…NYVKSPKFSK (2202 aa). The region spanning 12–127 is the CoV Nsp1 globular domain; the sequence is THVQLSLPVL…YRNVLLRKNG (116 aa). The region spanning 148–179 is the BetaCoV Nsp1 C-terminal domain; sequence ELGTDPIEDYEQNWNTKHGSGALRELTRELNG. One can recognise a CoV Nsp2 N-terminal domain in the interval 183–456; that stretch reads TRYVDNNFCG…NEDLLEILSR (274 aa). The Zn(2+) site is built by C200, C231, H234, H236, C323, C326, C341, C344, C370, C373, H382, and C416. The interval 200–236 is C2H2; that stretch reads CIKDFLARAGKSMCTLSEQLDYIESKRGVYCCRDHEH. A C4 region spans residues 323 to 344; the sequence is CNHCDEVSWQTCDFLKATCEHC. Positions 370-416 are C2HC; the sequence is CPACQDPEIGPEHSVADYHNHSNIETRLRKGGRTRCFGGCVFAYVGC. The region spanning 458–688 is the CoV Nsp2 middle domain; that stretch reads RVNINIVGDF…IDVVNKALEM (231 aa). The region spanning 690–818 is the CoV Nsp2 C-terminal domain; that stretch reads IDQVTIAGAK…TNNVFRLKGG (129 aa). In terms of domain architecture, Ubiquitin-like 1 spans 822–930; sequence KGVTFGEDTV…MYCSFYPPDE (109 aa). Disordered regions lie at residues 972 to 1003 and 1175 to 1198; these read RVEE…EEPV and RVEA…KSVV. Residues 974–999 show a composition bias toward acidic residues; it reads EEEEEEDWLDDTTEQSEIEPEPEPTP. The Macro 1 domain maps to 1003 to 1169; it reads VNQFTGYLKL…LYEQVVMDYL (167 aa). 2 Macro domains span residues 1207–1335 and 1343–1470; these read KIKA…LPSE and ILGT…TSSS. One can recognise a DPUP domain in the interval 1472–1538; that stretch reads TSEEHFVETV…SLDKLKSLLS (67 aa). The Ubiquitin-like 2 domain occupies 1542–1597; sequence VKTIKVFTTVDNTNLHTQLVDMSMTYGQQFGPTYLDGADVTKIKPHVNHEGKTFFV. Positions 1611–1875 constitute a Peptidase C16 domain; that stretch reads YYHTLDESFL…YTEIEPKLDG (265 aa). Catalysis depends on C1651, which acts as the For PL-PRO activity. C1729, C1732, C1764, and C1766 together coordinate Zn(2+). A C4-type zinc finger spans residues 1729-1766; sequence CKHCGQKTTTLTGVEAVMYMGTLSYDNLKTGVSIPCVC. Active-site for PL-PRO activity residues include H1812 and D1826. The 111-residue stretch at 1888-1998 folds into the Nucleic acid-binding domain; that stretch reads PIDLVPTQPL…CLWSTKPVDT (111 aa). The G2M domain maps to 2023–2132; the sequence is PTSEEVVENP…LGQAAITTSN (110 aa). Residues 2203–2223 form a helical membrane-spanning segment; it reads LFTIAMWLLLLSICLGSLICV. An HD1 region spans residues 2203 to 2324; it reads LFTIAMWLLL…FYLLGLSAIM (122 aa). The 71-residue stretch at 2224–2294 folds into the 3Ecto domain; it reads TAAFGVLLSN…QVTISSYKLD (71 aa). Residues 2224 to 2303 are Lumenal-facing; sequence TAAFGVLLSN…DLTILGLAAE (80 aa). Intrachain disulfides connect C2240/C2268 and C2259/C2265. Residues 2304–2324 form a helical membrane-spanning segment; it reads WVLAYMLFTKFFYLLGLSAIM. Topologically, residues 2325-2754 are cytoplasmic; the sequence is QVFFGYFASH…TCFKLMLKAT (430 aa). Residues 2372 to 2462 are Y1; that stretch reads KSYVHIMDGC…QFKRPINPTD (91 aa). Residues 2372 to 2740 form the CoV Nsp3 Y domain; sequence KSYVHIMDGC…ITTKISLKGG (369 aa). Residues H2376, C2381, C2386, C2389, C2422, H2425, C2429, and C2432 each coordinate Zn(2+). Positions 2376–2389 are ZF1; it reads HIMDGCTSSTCMMC. The tract at residues 2422–2432 is ZF2; that stretch reads CKTHNWNCLNC. The tract at residues 2463-2557 is Y2; the sequence is QSSYIVDSVA…LLDQALVSDV (95 aa). The segment at 2463 to 2740 is coV-Y; sequence QSSYIVDSVA…ITTKISLKGG (278 aa). Residues 2558–2639 form a Y3 region; that stretch reads GDSTEVSVKM…ECLKLSHHSD (82 aa). Residues 2640–2740 form a Y4 region; sequence LEVTGDSCNN…ITTKISLKGG (101 aa). The chain crosses the membrane as a helical span at residues 2755 to 2775; the sequence is LLCVLAALVCYIVMPVHTLSI. The tract at residues 2755 to 3125 is HD2; that stretch reads LLCVLAALVC…WITAIYVFCI (371 aa). The Lumenal portion of the chain corresponds to 2776–3021; that stretch reads HDGYTNEIIG…VQPVGALDVS (246 aa). Residues 3022–3042 form a helical membrane-spanning segment; that stretch reads ASVVAGGIIAILVTCAAYYFM. Residues 3043 to 3076 are Cytoplasmic-facing; sequence KFRRVFGEYNHVVAANALLFLMSFTILCLVPAYS. A helical membrane pass occupies residues 3077–3097; it reads FLPGVYSVFYLYLTFYFTNDV. Topologically, residues 3098-3104 are lumenal; sequence SFLAHLQ. Residues 3105–3125 form a helical membrane-spanning segment; the sequence is WFAMFSPIVPFWITAIYVFCI. At 3126–3563 the chain is on the cytoplasmic side; that stretch reads SLKHCHWFFN…KGTHHWMLLT (438 aa). The Nsp4C domain maps to 3142–3240; that stretch reads VMFNGVTFST…QTSITSAVLQ (99 aa). One can recognise a Peptidase C30 domain in the interval 3241–3546; it reads SGFRKMAFPS…VRQCSGVTFQ (306 aa). Catalysis depends on for 3CL-PRO activity residues H3281 and C3385. A helical membrane pass occupies residues 3564-3584; that stretch reads FLTSLLILVQSTQWSLFFFVY. Positions 3564–3776 are HD3; that stretch reads FLTSLLILVQ…CCCYFGLFCL (213 aa). Position 3585 (E3585) is a topological domain, lumenal. The helical transmembrane segment at 3586 to 3606 threads the bilayer; the sequence is NAFLPFTLGIMAIAACAMLLV. The Cytoplasmic portion of the chain corresponds to 3607–3611; the sequence is KHKHA. A helical transmembrane segment spans residues 3612–3632; it reads FLCLFLLPSLATVAYFNMVYM. Residues 3633–3657 lie on the Lumenal side of the membrane; it reads PASWVMRIMTWLELADTSLSGYRLK. The helical transmembrane segment at 3658-3678 threads the bilayer; sequence DCVMYASALVLLILMTARTVY. The Cytoplasmic segment spans residues 3679–3727; it reads DDAARRVWTLMNVITLVYKVYYGNALDQAISMWALVISVTSNYSGVVTT. A helical membrane pass occupies residues 3728-3748; the sequence is IMFLARAIVFVCVEYYPLLFI. Over 3749–3755 the chain is Lumenal; sequence TGNTLQC. The helical transmembrane segment at 3756-3776 threads the bilayer; the sequence is IMLVYCFLGYCCCCYFGLFCL. At 3777–7073 the chain is on the cytoplasmic side; the sequence is LNRYFRLTLG…VVSSDILVNN (3297 aa). The region spanning 3837–3919 is the RdRp Nsp7 cofactor domain; sequence SKMSDVKCTS…EMLDNRATLQ (83 aa). The 198-residue stretch at 3920-4117 folds into the RdRp Nsp8 cofactor domain; it reads AIASEFSSLP…LRANSAVKLQ (198 aa). Residues 4118–4230 form the Nsp9 ssRNA-binding domain; that stretch reads NNELSPVALR…GSLAATVRLQ (113 aa). Residues 4231-4369 enclose the ExoN/MTase coactivator domain; the sequence is AGNATEVPAN…CDQLREPLMQ (139 aa). Zn(2+)-binding residues include C4304, C4307, H4313, C4320, C4347, C4350, C4358, and C4360. Zinc fingers lie at residues 4304 to 4320 and 4347 to 4360; these read CLYC…KGFC and CTVC…GCSC. Residues 4376–4630 form the NiRAN domain; it reads FLNRVCGVSA…AAESHMDADL (255 aa). The Mn(2+) site is built by N4578 and D4587. The region spanning 4635-4733 is the Nsp12 Interface domain; that stretch reads IKWDLLKYDF…HNQDVNLHSS (99 aa). Residues H4664, C4670, C4675, C4679, and C4856 each coordinate Zn(2+). In terms of domain architecture, Nsp12 RNA-dependent RNA polymerase spans 4734-5301; it reads RLSFKELLVY…AMYTPHTVLQ (568 aa). A rdRp Fingers N-ter region spans residues 4736–4950; that stretch reads SFKELLVYAA…HQKLLKSIAA (215 aa). The tract at residues 4951-4989 is rdRp Palm N-ter; sequence TRGATVVIGTSKFYGGWHNMLKTVYSDVETPHLMGWDYP. A RdRp catalytic domain is found at 4981-5143; it reads PHLMGWDYPK…CYNSNYAAQG (163 aa). The interval 4990–5048 is rdRp Fingers C-ter; sequence KCDRAMPNMLRIMASLVLARKHNTCCNLSHRFYRLANECAQVLSEMVMCGGSLYVKPGG. Residues H5011, C5014, and C5015 each coordinate Zn(2+). Residues 5049–5184 form a rdRp Palm C-ter region; that stretch reads TSSGDATTAY…TKGPHEFCSQ (136 aa). Active-site residues include S5128, D5129, and D5130. Residues 5185–5301 are rdRp Thumb; it reads HTMLVKQGDD…AMYTPHTVLQ (117 aa). A CV ZBD domain is found at 5302–5414; the sequence is AVGACVLCNS…TDFNAIATCD (113 aa). Residues C5306, C5309, C5317, C5320, C5327, C5330, H5334, H5340, C5351, C5356, C5373, and H5376 each contribute to the Zn(2+) site. The 182-residue stretch at 5558-5739 folds into the (+)RNA virus helicase ATP-binding domain; the sequence is NISDEFSSNV…MKTIGPDMFL (182 aa). 5583–5590 contributes to the ATP binding site; that stretch reads GPPGTGKS. One can recognise a (+)RNA virus helicase C-terminal domain in the interval 5740 to 5909; sequence GTCRRCPAEI…TLQAENVTGL (170 aa). One can recognise an ExoN domain in the interval 5974 to 6189; it reads MFITREEAIR…RCLAVHECFV (216 aa). Active-site residues include D5992, E5994, and E6093. Mg(2+)-binding residues include E5994 and E6093. Zn(2+) contacts are provided by C6109, C6112, C6128, H6131, H6159, C6163, and H6166. Active-site residues include H6170 and D6175. Mg(2+) is bound by residues H6170 and D6175. C6181 serves as a coordination point for Zn(2+). The region spanning 6198–6429 is the N7-MTase domain; sequence YPIIGDELRV…NLWNTFTRLQ (232 aa). An S-adenosyl-L-methionine-binding site is contributed by 6233–6239; the sequence is DIGNPKA. Residues 6316 to 6330 are gpppA-binding; the sequence is CDGGSLYVNKHAFHT. Residues C6354, C6375, C6386, and H6389 each coordinate Zn(2+). The 61-residue stretch at 6430–6490 folds into the Nsp15 N-terminal oligomerization domain; the sequence is SLENVAYNVV…NVAFELWAKR (61 aa). The 126-residue stretch at 6491-6616 folds into the AV-Nsp11N/CoV-Nsp15M domain; it reads NIKPVPEIKI…YFKKVDGIIQ (126 aa). One can recognise a NendoU domain in the interval 6633-6772; the sequence is KPRSQMETDF…KDGHVETFYP (140 aa). Active-site residues include H6663, H6678, K6718, K6821, D6905, K6945, and E6978. Residues 6777 to 7071 enclose the Nidovirus-type SAM-dependent 2'-O-MTase domain; it reads SQAWQPGVAM…RVVVSSDILV (295 aa).

This sequence belongs to the coronaviruses polyprotein 1ab family. Interacts with host PHB and PHB2. In terms of assembly, interacts with papain-like protease nsp3 and non-structural protein 6. As to quaternary structure, monomer. Homodimer. Only the homodimer shows catalytic activity. Interacts with nsp8 and nsp12 to form the replication-transcription complex (RTC): nsp12, nsp7, two subunits of nsp8, and up to two subunits of nsp13. Eight copies of nsp7 and eight copies of nsp8 assemble to form a heterohexadecamer dsRNA-encircling ring structure. In terms of assembly, interacts with nsp7, nsp13 and nsp12 to form the replication-transcription complex (RTC): nsp12, nsp7, two subunits of nsp8, and up to two subunits of nsp13. Eight copies of nsp7 and eight copies of nsp8 assemble to form a heterohexadecamer dsRNA-encircling ring structure. Interacts with ORF6 protein. As to quaternary structure, homodimer. Interacts with nsp12. Homododecamer. Interacts with proofreading exoribonuclease nsp14 and 2'-O-methyltransferase nsp16; these interactions enhance nsp14 and nsp16 enzymatic activities. In terms of assembly, interacts with nsp7 and nsp8 to form the replication-transcription complex (RTC): nsp12, nsp7, two subunits of nsp8, and up to two subunits of nsp13. Interacts with nsp9. As to quaternary structure, interacts with nsp8 to form the replication-transcription complex (RTC): nsp12, nsp7, two subunits of nsp8, and up to two subunits of nsp13. Interacts (via N-terminus) with host DDX1. Interacts with non-structural protein 10. In terms of assembly, homohexamer. As to quaternary structure, interacts with nsp10. The cofactor is Zn(2+). Requires Mn(2+) as cofactor. It depends on Mg(2+) as a cofactor. Specific enzymatic cleavages in vivo by its own proteases yield mature proteins. 3C-like proteinase nsp5 liberates nsps 6-16 from the polyprotein. Papain-like and 3C-like proteinases are autocatalytically processed.

The protein localises to the host cytoplasm. Its subcellular location is the host endosome. It is found in the host membrane. The protein resides in the host Golgi apparatus. It localises to the host perinuclear region. The protein localises to the host endoplasmic reticulum. Its subcellular location is the host endoplasmic reticulum-Golgi intermediate compartment. It carries out the reaction RNA(n) + a ribonucleoside 5'-triphosphate = RNA(n+1) + diphosphate. The catalysed reaction is ATP + H2O = ADP + phosphate + H(+). The enzyme catalyses TSAVLQ-|-SGFRK-NH2 and SGVTFQ-|-GKFKK the two peptides corresponding to the two self-cleavage sites of the SARS 3C-like proteinase are the two most reactive peptide substrates. The enzyme exhibits a strong preference for substrates containing Gln at P1 position and Leu at P2 position.. It catalyses the reaction Thiol-dependent hydrolysis of ester, thioester, amide, peptide and isopeptide bonds formed by the C-terminal Gly of ubiquitin (a 76-residue protein attached to proteins as an intracellular targeting signal).. It carries out the reaction a 5'-end (N(7)-methyl 5'-triphosphoguanosine)-ribonucleoside in mRNA + S-adenosyl-L-methionine = a 5'-end (N(7)-methyl 5'-triphosphoguanosine)-(2'-O-methyl-ribonucleoside) in mRNA + S-adenosyl-L-homocysteine + H(+). The catalysed reaction is uridylyl-uridylyl-ribonucleotide-RNA = a 3'-end uridylyl-2',3'-cyclophospho-uridine-RNA + a 5'-end dephospho-ribonucleoside-RNA. The enzyme catalyses a 5'-end (5'-triphosphoguanosine)-ribonucleoside in mRNA + S-adenosyl-L-methionine = a 5'-end (N(7)-methyl 5'-triphosphoguanosine)-ribonucleoside in mRNA + S-adenosyl-L-homocysteine. It catalyses the reaction a 5'-end diphospho-ribonucleoside in mRNA + GTP + H(+) = a 5'-end (5'-triphosphoguanosine)-ribonucleoside in mRNA + diphosphate. Inhibited by Remdesivir (GS-5734). Functionally, multifunctional protein involved in the transcription and replication of viral RNAs. Contains the proteinases responsible for the cleavages of the polyprotein. Inhibits host translation by interacting with the 40S ribosomal subunit. The nsp1-40S ribosome complex further induces an endonucleolytic cleavage near the 5'UTR of host mRNAs, targeting them for degradation. Viral mRNAs are not susceptible to nsp1-mediated endonucleolytic RNA cleavage thanks to the presence of a 5'-end leader sequence and are therefore protected from degradation. By suppressing host gene expression, nsp1 facilitates efficient viral gene expression in infected cells and evasion from host immune response. May disrupt nuclear pore function by binding and displacing host NUP93. Its function is as follows. May play a role in the modulation of host cell survival signaling pathway by interacting with host PHB and PHB2. Indeed, these two proteins play a role in maintaining the functional integrity of the mitochondria and protecting cells from various stresses. In terms of biological role, responsible for the cleavages located at the N-terminus of the replicase polyprotein. In addition, PL-PRO possesses a deubiquitinating/deISGylating activity and processes both 'Lys-48'- and 'Lys-63'-linked polyubiquitin chains from cellular substrates. Plays a role in host membrane rearrangement that leads to creation of cytoplasmic double-membrane vesicles (DMV) necessary for viral replication. Nsp3, nsp4 and nsp6 together are sufficient to form DMV. Antagonizes innate immune induction of type I interferon by blocking the phosphorylation, dimerization and subsequent nuclear translocation of host IRF3. Also prevents host NF-kappa-B signaling. Functionally, plays a role in host membrane rearrangement that leads to creation of cytoplasmic double-membrane vesicles (DMV) necessary for viral replication. Alone appears incapable to induce membrane curvature, but together with nsp3 is able to induce paired membranes. Nsp3, nsp4 and nsp6 together are sufficient to form DMV. Cleaves the C-terminus of replicase polyprotein at 11 sites. Recognizes substrates containing the core sequence [ILMVF]-Q-|-[SGACN]. May cleave human NLRP1 in lung epithelial cells, thereby activating the NLRP1 inflammasome pathway. Also able to bind an ADP-ribose-1''-phosphate (ADRP). May cleave host ATP6V1G1 thereby modifying host vacuoles intracellular pH. Its function is as follows. Plays a role in host membrane rearrangement that leads to creation of cytoplasmic double-membrane vesicles (DMV) necessary for viral replication. Nsp3, nsp4 and nsp6 together are sufficient to form DMV. Plays a role in the initial induction of autophagosomes from host endoplasmic reticulum. Later, limits the expansion of these phagosomes that are no longer able to deliver viral components to lysosomes. In terms of biological role, forms a hexadecamer with nsp8 (8 subunits of each) that may participate in viral replication by acting as a primase. Alternatively, may synthesize substantially longer products than oligonucleotide primers. Functionally, forms a hexadecamer with nsp7 (8 subunits of each) that may participate in viral replication by acting as a primase. Alternatively, may synthesize substantially longer products than oligonucleotide primers. Forms a primer, NSP9-pU, which is utilized by the polymerase for the initiation of RNA chains. Interacts with ribosome signal recognition particle RNA (SRP). Together with NSP8, suppress protein integration into the cell membrane, thereby disrupting host immune defenses. Its function is as follows. Plays a pivotal role in viral transcription by stimulating both nsp14 3'-5' exoribonuclease and nsp16 2'-O-methyltransferase activities. Therefore plays an essential role in viral mRNAs cap methylation. In terms of biological role, RNA-directed RNA polymerase that catalyzes the transcription of viral genomic and subgenomic RNAs. Acts in complex with nsp7 and nsp8 to transcribe both the minus and positive strands of genomic RNA. The kinase-like NiRAN domain of NSP12 attaches one or more nucleotides to the amino terminus of NSP9, forming a covalent RNA-protein intermediate that serves as transcription/replication primer. Subgenomic RNAs (sgRNAs) are formed by discontinuous transcription: The polymerase has the ability to pause at transcription-regulating sequences (TRS) and jump to the leader TRS, resulting in a major deletion. This creates a series of subgenomic RNAs that are replicated, transcribed and translated. In addition, Nsp12 is a subunit of the viral RNA capping enzyme that catalyzes the RNA guanylyltransferase reaction for genomic and sub-genomic RNAs. Subsequently, the NiRAN domain transfers RNA to GDP, and forms the core cap structure GpppA-RNA. Functionally, multi-functional protein with a zinc-binding domain in N-terminus displaying RNA and DNA duplex-unwinding activities with 5' to 3' polarity. Activity of helicase is dependent on magnesium. Plays a role in viral RNA synthesis through two distinct activities. The N7-guanine methyltransferase activity plays a role in the formation of the cap structure GpppA-RNA. The proofreading exoribonuclease reduces the sensitivity of the virus to RNA mutagens during replication. This activity acts on both ssRNA and dsRNA in a 3'-5' direction. Its function is as follows. Plays a role in viral transcription/replication and prevents the simultaneous activation of host cell dsRNA sensors, such as MDA5/IFIH1, OAS, and PKR. Acts by degrading the 5'-polyuridines generated during replication of the poly(A) region of viral genomic and subgenomic RNAs. Catalyzes a two-step reaction in which a 2'3'-cyclic phosphate (2'3'-cP) is first generated by 2'-O transesterification, which is then hydrolyzed to a 3'-phosphate (3'-P). If not degraded, poly(U) RNA would hybridize with poly(A) RNA tails and activate host dsRNA sensors. In terms of biological role, methyltransferase that mediates mRNA cap 2'-O-ribose methylation to the 5'-cap structure of viral mRNAs. N7-methyl guanosine cap is a prerequisite for binding of nsp16. Therefore plays an essential role in viral mRNAs cap methylation which is essential to evade immune system. This is Replicase polyprotein 1ab (rep) from Severe acute respiratory syndrome coronavirus (SARS-CoV).